Reading from the N-terminus, the 295-residue chain is Protein FAM221A (295 aa).

Positions 244 to 295 (SEPPGIDKQVSSMRLSEEDDMAYFERRYQERLRKEKEHKRQKNSKPPTTQRP) are disordered. A compositionally biased stretch (basic and acidic residues) spans 266–278 (YFERRYQERLRKE).

Belongs to the FAM221 family.

This Xenopus laevis (African clawed frog) protein is Protein FAM221A (fam221a).